Here is a 571-residue protein sequence, read N- to C-terminus: Hemagglutinin-neuraminidase (571 aa).

Over M1–T25 the chain is Intravirion. Residues I26–L46 form a helical membrane-spanning segment. Residues D47–P571 are Virion surface-facing. Intrachain disulfides connect C166/C190, C180/C241, and C232/C245. The tract at residues N228–S233 is involved in neuraminidase activity. N-linked (GlcNAc...) asparagine; by host glycosylation is found at N272, N284, and N335. Cystine bridges form between C338–C459, C370–C380, and C453–C463. 6 N-linked (GlcNAc...) asparagine; by host glycosylation sites follow: N386, N454, N498, N501, N517, and N522. C535 and C546 are oxidised to a cystine.

The protein belongs to the paramyxoviruses hemagglutinin-neuraminidase family. In terms of assembly, homotetramer; composed of disulfide-linked homodimers. Interacts with F protein trimer.

The protein resides in the virion membrane. It localises to the host cell membrane. It carries out the reaction Hydrolysis of alpha-(2-&gt;3)-, alpha-(2-&gt;6)-, alpha-(2-&gt;8)- glycosidic linkages of terminal sialic acid residues in oligosaccharides, glycoproteins, glycolipids, colominic acid and synthetic substrates.. Its function is as follows. Attaches the virus to sialic acid-containing cell receptors and thereby initiating infection. Binding of HN protein to the receptor induces a conformational change that allows the F protein to trigger virion/cell membranes fusion. Functionally, neuraminidase activity ensures the efficient spread of the virus by dissociating the mature virions from the neuraminic acid containing glycoproteins. The polypeptide is Hemagglutinin-neuraminidase (HN) (Homo sapiens (Human)).